The chain runs to 1099 residues: Exonuclease/helicase subunit RexB (1099 aa).

Residues Cys-766, Cys-1056, Cys-1059, and Cys-1065 each contribute to the [4Fe-4S] cluster site.

Belongs to the helicase family. AddB/RexB type 2 subfamily. Heterodimer of RexA (AddA) and RexB. Mg(2+) is required as a cofactor. [4Fe-4S] cluster serves as cofactor.

Functionally, the heterodimer acts both as an ATP-dependent DNA helicase and an ATP-dependent, dual-direction single-stranded exonuclease. Recognizes the L.lactis chi site (5'-GCGCGTG-3'), which stimulates homologous recombination. This subunit has 5'-&gt;3' exonuclease activity. Its function is as follows. The heterodimer acts as both an ATP-dependent DNA helicase and an ATP-dependent, dual-direction single-stranded exonuclease. Recognizes the chi site generating a DNA molecule suitable for the initiation of homologous recombination. This subunit has 5' -&gt; 3' nuclease activity but not helicase activity. This Lactococcus lactis subsp. cremoris (strain MG1363) protein is Exonuclease/helicase subunit RexB.